The chain runs to 670 residues: Histone-lysine N-methyltransferase, H3 lysine-9 specific SUVH1 (670 aa).

Residues 53-140 (YPFSSSQANQ…RPISRPENMN (88 aa)) are disordered. Residues 68 to 79 (NQAQYPPQHQQP) show a composition bias toward low complexity. The segment covering 123–133 (VKRRIPKKRPI) has biased composition (basic residues). The 147-residue stretch at 211 to 357 (GIVPGVEIGD…HNTFKYKLVR (147 aa)) folds into the YDG domain. One can recognise a Pre-SET domain in the interval 432–492 (FGCDCANLCK…TCKNKVTQMG (61 aa)). Cys434, Cys436, Cys440, Cys447, Cys449, Cys475, Cys479, Cys481, and Cys484 together coordinate Zn(2+). One can recognise an SET domain in the interval 495 to 639 (VRLEVFKTAN…PMTELTYDYG (145 aa)). S-adenosyl-L-methionine contacts are provided by residues 505–507 (RGW), Asp541, Tyr543, Arg593, and 596–597 (NH). Zn(2+)-binding residues include Cys599, Cys658, Cys660, and Cys665. In terms of domain architecture, Post-SET spans 654–670 (GKRKCFCGSAYCRGSFG).

Belongs to the class V-like SAM-binding methyltransferase superfamily. Histone-lysine methyltransferase family. Suvar3-9 subfamily. Expressed in leaves stems and flowers.

It is found in the nucleus. The protein localises to the chromosome. The protein resides in the centromere. It catalyses the reaction L-lysyl(9)-[histone H3] + 2 S-adenosyl-L-methionine = N(6),N(6)-dimethyl-L-lysyl(9)-[histone H3] + 2 S-adenosyl-L-homocysteine + 2 H(+). In terms of biological role, histone methyltransferase. Methylates 'Lys-9' of histone H3. H3 'Lys-9' methylation represents a specific tag for epigenetic transcriptional repression. In Arabidopsis thaliana (Mouse-ear cress), this protein is Histone-lysine N-methyltransferase, H3 lysine-9 specific SUVH1 (SUVH1).